A 48-amino-acid chain; its full sequence is MARYRCCRSQSRSRCRRRRRRCYRRRRRCCRRRRRRVCCRRYTRYRRR.

This sequence belongs to the protamine P1 family. Testis.

The protein resides in the nucleus. It is found in the chromosome. Protamines substitute for histones in the chromatin of sperm during the haploid phase of spermatogenesis. They compact sperm DNA into a highly condensed, stable and inactive complex. This is Sperm protamine P1 (PRM1) from Corynorhinus townsendii (Townsend's big-eared bat).